Reading from the N-terminus, the 253-residue chain is Homeotic protein ultrabithorax (253 aa).

Residues G125–N141 are compositionally biased toward low complexity. The tract at residues G125–Q193 is disordered. The span at R176–G189 shows a compositional bias: gly residues. The short motif at F237–A242 is the Antp-type hexapeptide element.

This sequence belongs to the Antp homeobox family.

It localises to the nucleus. Its function is as follows. Sequence-specific transcription factor which is part of a developmental regulatory system that provides cells with specific positional identities on the anterior-posterior axis. Binds the consensus region 5'-TTAAT[GT][GA]-3'. This homeotic protein controls development of the cells in the posterior thoracic and first abdominal segments. It activates the synthesis of the decapentaplegic (DPP) growth factor. This Drosophila funebris (Fruit fly) protein is Homeotic protein ultrabithorax (Ubx).